Consider the following 255-residue polypeptide: 3-deoxy-manno-octulosonate cytidylyltransferase (255 aa).

The protein belongs to the KdsB family.

The protein resides in the cytoplasm. It catalyses the reaction 3-deoxy-alpha-D-manno-oct-2-ulosonate + CTP = CMP-3-deoxy-beta-D-manno-octulosonate + diphosphate. Its pathway is nucleotide-sugar biosynthesis; CMP-3-deoxy-D-manno-octulosonate biosynthesis; CMP-3-deoxy-D-manno-octulosonate from 3-deoxy-D-manno-octulosonate and CTP: step 1/1. The protein operates within bacterial outer membrane biogenesis; lipopolysaccharide biosynthesis. Activates KDO (a required 8-carbon sugar) for incorporation into bacterial lipopolysaccharide in Gram-negative bacteria. This Saccharophagus degradans (strain 2-40 / ATCC 43961 / DSM 17024) protein is 3-deoxy-manno-octulosonate cytidylyltransferase.